Consider the following 813-residue polypeptide: Histone acetyltransferase KAT2B (813 aa).

2 disordered regions span residues 1–55 and 380–423; these read MAEA…GGSA and NSTS…EAKR. Low complexity predominate over residues 32–46; the sequence is ASCGPATAVAAAGTA. The segment covering 380–391 has biased composition (polar residues); sequence NSTSHEQINGGR. The span at 406 to 423 shows a compositional bias: basic and acidic residues; the sequence is PGEKRKMNNSHAPEEAKR. The 149-residue stretch at 484-632 folds into the N-acetyltransferase domain; the sequence is LNQKPNKKIL…GATLMGCELN (149 aa). The active-site Proton donor/acceptor is glutamate 551. Acetyl-CoA is bound by residues 555-557, 562-568, and 593-596; these read CAV, QVKGYGT, and YAIG. One can recognise a Bromo domain in the interval 704-808; the sequence is KDPEQLYSTL…KFFFSKIKEA (105 aa).

This sequence belongs to the acetyltransferase family. GCN5 subfamily. In terms of assembly, interacts with BCAS3. Interacts with SIRT1. Interacts with EP300, CREBBP and DDX17. Component of a large chromatin remodeling complex, at least composed of MYSM1, KAT2B/PCAF, RBM10 and KIF11/TRIP5. Interacts with KLF1; the interaction does not acetylate KLF1 and there is no enhancement of its transactivational activity. Interacts with NFE4. Interacts with MECOM. Interacts with NR2C2 (hypophosphorylated and unsumoylated form); the interaction promotes the transactivation activity of NR2C2. Interacts with NFE4. Interacts with MECOM. Interacts with E2F1; the interaction acetylates E2F1 augmenting its DNA-binding and transcriptional activity. Interacts with NPAS2, BMAL1 and CLOCK. Interacts (unsumoylated form) with NR2C1; the interaction promotes transactivation activity. Interacts with CEBPB. Interacts with NR4A3. Interacts with TBX5. Interacts with PLK4. Interacts with RB1; this interaction leads to RB1 acetylation. Interacts with VRK1.

The protein localises to the nucleus. The protein resides in the cytoplasm. Its subcellular location is the cytoskeleton. It localises to the microtubule organizing center. It is found in the centrosome. It carries out the reaction L-lysyl-[histone] + acetyl-CoA = N(6)-acetyl-L-lysyl-[histone] + CoA + H(+). The catalysed reaction is L-lysyl-[protein] + acetyl-CoA = N(6)-acetyl-L-lysyl-[protein] + CoA + H(+). It catalyses the reaction spermidine + acetyl-CoA = N(8)-acetylspermidine + CoA + H(+). In terms of biological role, functions as a histone acetyltransferase (HAT) to promote transcriptional activation. Has significant histone acetyltransferase activity with core histones (H3 and H4), and also with nucleosome core particles. Has a a strong preference for acetylation of H3 at 'Lys-9' (H3K9ac). Also acetylates non-histone proteins, such as ACLY, MAPRE1/EB1, PLK4, RRP9/U3-55K and TBX5. Acts as a circadian transcriptional coactivator which enhances the activity of the circadian transcriptional activators: NPAS2-BMAL1 and CLOCK-BMAL1 heterodimers. Involved in heart and limb development by mediating acetylation of TBX5, acetylation regulating nucleocytoplasmic shuttling of TBX5. Acts as a negative regulator of centrosome amplification by mediating acetylation of PLK4. Acetylates RRP9/U3-55K, a core subunit of the U3 snoRNP complex, impairing pre-rRNA processing. Acetylates MAPRE1/EB1, promoting dynamic kinetochore-microtubule interactions in early mitosis. Also acetylates spermidine. The protein is Histone acetyltransferase KAT2B of Mus musculus (Mouse).